Here is a 443-residue protein sequence, read N- to C-terminus: 3-phosphoshikimate 1-carboxyvinyltransferase (443 aa).

Positions 1–25 (MSHSAEPLPMTARRSGPLTGEAQVP) are disordered. 3-phosphoshikimate is bound by residues lysine 28, serine 29, and arginine 33. Residue lysine 28 coordinates phosphoenolpyruvate. Phosphoenolpyruvate contacts are provided by glycine 101 and arginine 129. 3-phosphoshikimate is bound by residues serine 174, glutamine 176, aspartate 326, and lysine 353. Glutamine 176 is a binding site for phosphoenolpyruvate. Aspartate 326 acts as the Proton acceptor in catalysis. Arginine 357 and arginine 400 together coordinate phosphoenolpyruvate.

Belongs to the EPSP synthase family. In terms of assembly, monomer.

It is found in the cytoplasm. The catalysed reaction is 3-phosphoshikimate + phosphoenolpyruvate = 5-O-(1-carboxyvinyl)-3-phosphoshikimate + phosphate. It participates in metabolic intermediate biosynthesis; chorismate biosynthesis; chorismate from D-erythrose 4-phosphate and phosphoenolpyruvate: step 6/7. In terms of biological role, catalyzes the transfer of the enolpyruvyl moiety of phosphoenolpyruvate (PEP) to the 5-hydroxyl of shikimate-3-phosphate (S3P) to produce enolpyruvyl shikimate-3-phosphate and inorganic phosphate. This chain is 3-phosphoshikimate 1-carboxyvinyltransferase, found in Paracoccus denitrificans (strain Pd 1222).